Reading from the N-terminus, the 305-residue chain is ATP synthase gamma chain (305 aa).

It belongs to the ATPase gamma chain family. F-type ATPases have 2 components, CF(1) - the catalytic core - and CF(0) - the membrane proton channel. CF(1) has five subunits: alpha(3), beta(3), gamma(1), delta(1), epsilon(1). CF(0) has three main subunits: a, b and c.

It is found in the cell membrane. In terms of biological role, produces ATP from ADP in the presence of a proton gradient across the membrane. The gamma chain is believed to be important in regulating ATPase activity and the flow of protons through the CF(0) complex. The polypeptide is ATP synthase gamma chain (Streptomyces griseus subsp. griseus (strain JCM 4626 / CBS 651.72 / NBRC 13350 / KCC S-0626 / ISP 5235)).